The primary structure comprises 385 residues: Protein pelota homolog (385 aa).

It belongs to the eukaryotic release factor 1 family. Pelota subfamily. In terms of assembly, component of the Pelota-HBS1L complex, also named Dom34-Hbs1 complex, composed of PELO and HBS1L. Requires a divalent metal cation as cofactor.

The protein resides in the cytoplasm. Functionally, component of the Pelota-HBS1L complex, a complex that recognizes stalled ribosomes and triggers the No-Go Decay (NGD) pathway. In the Pelota-HBS1L complex, PELO recognizes ribosomes stalled at the 3' end of an mRNA and engages stalled ribosomes by destabilizing mRNA in the mRNA channel. Following mRNA extraction from stalled ribosomes by the SKI complex, the Pelota-HBS1L complex promotes recruitment of ABCE1, which drives the disassembly of stalled ribosomes, followed by degradation of damaged mRNAs as part of the NGD pathway. The chain is Protein pelota homolog (PELO) from Gallus gallus (Chicken).